The sequence spans 648 residues: Copper methylamine oxidase (648 aa).

Positions 1 to 9 (MTLNAESEA) are excised as a propeptide. Residue 299 to 310 (AFDSGEYNIGNM) coordinates substrate. Catalysis depends on Asp-301, which acts as the Proton acceptor. Cys-320 and Cys-346 are oxidised to a cystine. 382–387 (VANYEY) is a binding site for substrate. Catalysis depends on Tyr-385, which acts as the Schiff-base intermediate with substrate; via topaquinone. Tyr-385 carries the 2',4',5'-topaquinone modification. 2 residues coordinate Cu cation: His-436 and His-438. Mn(2+) is bound by residues Asp-445, Phe-446, and Asp-584. A Cu cation-binding site is contributed by His-595. Residues 629 to 648 (PTSTSTTQTGEADTCCHTDK) are disordered.

Belongs to the copper/topaquinone oxidase family. Homodimer. Cu cation is required as a cofactor. Requires Zn(2+) as cofactor. L-topaquinone serves as cofactor. It depends on Mn(2+) as a cofactor. Topaquinone (TPQ) is generated by copper-dependent autoxidation of a specific tyrosyl residue.

It catalyses the reaction a primary methyl amine + O2 + H2O = an aldehyde + H2O2 + NH4(+). This is Copper methylamine oxidase (maoII) from Arthrobacter sp. (strain P1).